A 184-amino-acid chain; its full sequence is Large ribosomal subunit protein uL15 (184 aa).

The disordered stretch occupies residues 1–62 (MDLSSLRPAK…QMPMYRRLPK (62 aa)). Over residues 21–35 (RGPGSGNGTTAGKGN) the composition is skewed to gly residues.

This sequence belongs to the universal ribosomal protein uL15 family. Part of the 50S ribosomal subunit.

Binds to the 23S rRNA. This chain is Large ribosomal subunit protein uL15, found in Chlorobaculum parvum (strain DSM 263 / NCIMB 8327) (Chlorobium vibrioforme subsp. thiosulfatophilum).